Consider the following 237-residue polypeptide: Coat protein (237 aa).

The disordered stretch occupies residues 1–24 (MSAPASTTQATGSTTSTTTKTAGA).

The protein belongs to the potexvirus capsid protein family.

The protein resides in the virion. Its function is as follows. Required for genome encapsidation. Forms ribonucleoprotein complexes along with TGB1 helicase and viral RNA. The sequence is that of Coat protein from Brassica campestris (Field mustard).